Here is a 149-residue protein sequence, read N- to C-terminus: Hut operon positive regulatory protein (149 aa).

It belongs to the HutP family. In terms of assembly, homohexamer.

Antiterminator that binds to cis-acting regulatory sequences on the mRNA in the presence of histidine, thereby suppressing transcription termination and activating the hut operon for histidine utilization. This Geobacillus thermodenitrificans (strain NG80-2) protein is Hut operon positive regulatory protein.